Consider the following 810-residue polypeptide: Phenylalanine--tRNA ligase beta subunit (810 aa).

A tRNA-binding domain is found at Ala-39–Arg-154. One can recognise a B5 domain in the interval Pro-405 to Ala-480. Mg(2+) contacts are provided by Asp-458, Asp-464, Glu-467, and Glu-468. The FDX-ACB domain occupies Ser-707 to Arg-809.

The protein belongs to the phenylalanyl-tRNA synthetase beta subunit family. Type 1 subfamily. Tetramer of two alpha and two beta subunits. It depends on Mg(2+) as a cofactor.

It localises to the cytoplasm. The enzyme catalyses tRNA(Phe) + L-phenylalanine + ATP = L-phenylalanyl-tRNA(Phe) + AMP + diphosphate + H(+). In Burkholderia mallei (strain ATCC 23344), this protein is Phenylalanine--tRNA ligase beta subunit.